The sequence spans 186 residues: Threonylcarbamoyl-AMP synthase (186 aa).

Positions 5 to 186 constitute a YrdC-like domain; sequence TQSINDAVKC…DAITGEILRL (182 aa).

Belongs to the SUA5 family. TsaC subfamily.

The protein localises to the cytoplasm. It catalyses the reaction L-threonine + hydrogencarbonate + ATP = L-threonylcarbamoyladenylate + diphosphate + H2O. Required for the formation of a threonylcarbamoyl group on adenosine at position 37 (t(6)A37) in tRNAs that read codons beginning with adenine. Catalyzes the conversion of L-threonine, HCO(3)(-)/CO(2) and ATP to give threonylcarbamoyl-AMP (TC-AMP) as the acyladenylate intermediate, with the release of diphosphate. The chain is Threonylcarbamoyl-AMP synthase from Coxiella burnetii (strain RSA 331 / Henzerling II).